The primary structure comprises 276 residues: Phosphonates import ATP-binding protein PhnC (276 aa).

In terms of domain architecture, ABC transporter spans 2–246; that stretch reads LEIHNLQKSY…VLTRIYGAED (245 aa). 35–42 serves as a coordination point for ATP; sequence GPSGAGKS.

This sequence belongs to the ABC transporter superfamily. Phosphonates importer (TC 3.A.1.9.1) family. In terms of assembly, the complex is composed of two ATP-binding proteins (PhnC), two transmembrane proteins (PhnE) and a solute-binding protein (PhnD).

Its subcellular location is the cell inner membrane. The enzyme catalyses phosphonate(out) + ATP + H2O = phosphonate(in) + ADP + phosphate + H(+). Functionally, part of the ABC transporter complex PhnCDE involved in phosphonates import. Responsible for energy coupling to the transport system. This chain is Phosphonates import ATP-binding protein PhnC, found in Alcaligenes faecalis.